The primary structure comprises 299 residues: GTP cyclohydrolase FolE2 (299 aa).

Positions 1-25 are disordered; it reads MKTKQWPSKTERHKRFGSVPPVAGK.

Belongs to the GTP cyclohydrolase IV family.

It carries out the reaction GTP + H2O = 7,8-dihydroneopterin 3'-triphosphate + formate + H(+). It functions in the pathway cofactor biosynthesis; 7,8-dihydroneopterin triphosphate biosynthesis; 7,8-dihydroneopterin triphosphate from GTP: step 1/1. Converts GTP to 7,8-dihydroneopterin triphosphate. The sequence is that of GTP cyclohydrolase FolE2 from Halalkalibacterium halodurans (strain ATCC BAA-125 / DSM 18197 / FERM 7344 / JCM 9153 / C-125) (Bacillus halodurans).